The following is a 247-amino-acid chain: Suppressor of silencing P0 (247 aa).

Residues 76 to 95 (LPRHLHYECLEWGLLCGTHP) form the F-box-like domain.

It belongs to the polerovirus P0 protein family.

Its function is as follows. Suppressor of RNA-mediated gene silencing, also known as post-transcriptional gene silencing (PTGS), a mechanism of plant viral defense that limits the accumulation of viral RNAs. The P0 protein suppresses local PTGS using its F-box-like domain to mediate destabilization and degradation of the AGO1 protein, although not via an interaction with host SKP1A. Participates, together with the proteins P1 and P7, in the inhibition of the induction of aphid-induced host phytohormones. This could play a role in the attraction to the infected plants by aphids. This chain is Suppressor of silencing P0, found in Potato leafroll virus (strain Potato/Scotland/strain 1/1984) (PLrV).